A 416-amino-acid polypeptide reads, in one-letter code: Gamma-glutamyl phosphate reductase (416 aa).

This sequence belongs to the gamma-glutamyl phosphate reductase family.

The protein resides in the cytoplasm. It catalyses the reaction L-glutamate 5-semialdehyde + phosphate + NADP(+) = L-glutamyl 5-phosphate + NADPH + H(+). The protein operates within amino-acid biosynthesis; L-proline biosynthesis; L-glutamate 5-semialdehyde from L-glutamate: step 2/2. In terms of biological role, catalyzes the NADPH-dependent reduction of L-glutamate 5-phosphate into L-glutamate 5-semialdehyde and phosphate. The product spontaneously undergoes cyclization to form 1-pyrroline-5-carboxylate. This Streptococcus pyogenes serotype M1 protein is Gamma-glutamyl phosphate reductase.